The following is a 237-amino-acid chain: Urease accessory protein UreF (237 aa).

The protein belongs to the UreF family. UreD, UreF and UreG form a complex that acts as a GTP-hydrolysis-dependent molecular chaperone, activating the urease apoprotein by helping to assemble the nickel containing metallocenter of UreC. The UreE protein probably delivers the nickel.

It is found in the cytoplasm. In terms of biological role, required for maturation of urease via the functional incorporation of the urease nickel metallocenter. The protein is Urease accessory protein UreF of Streptococcus thermophilus (strain ATCC BAA-250 / LMG 18311).